A 288-amino-acid chain; its full sequence is RanBP2-type zinc finger protein At1g67325 (288 aa).

The segment covering 1–11 has biased composition (polar residues); it reads MSQVDNRNSSA. Disordered regions lie at residues 1 to 24, 52 to 77, 176 to 198, 222 to 248, and 265 to 288; these read MSQV…RRED, PADH…GAYL, MPRP…DNDW, PKPG…WKCD, and NCGA…ENDQ. The span at 15 to 24 shows a compositional bias: basic and acidic residues; sequence ARTDGGRRED. 3 RanBP2-type zinc fingers span residues 22 to 53, 194 to 225, and 241 to 272; these read REDD…PRPA, RDND…PKPG, and PEGS…DKPG. A compositionally biased stretch (basic and acidic residues) spans 181 to 197; the sequence is FYPDEKSQKRDSTRDND. A compositionally biased stretch (polar residues) spans 223-241; the sequence is KPGSQQGGSSDKISKQNAP. Ser278 is subject to Phosphoserine.

This chain is RanBP2-type zinc finger protein At1g67325, found in Arabidopsis thaliana (Mouse-ear cress).